The chain runs to 129 residues: Follitropin subunit beta (129 aa).

The signal sequence occupies residues 1 to 18; the sequence is MKSVQFCFLFCCWRATCC. Intrachain disulfides connect Cys21–Cys69, Cys35–Cys84, Cys38–Cys122, Cys46–Cys100, Cys50–Cys102, and Cys105–Cys112. N-linked (GlcNAc...) asparagine glycosylation is found at Asn25 and Asn42.

It belongs to the glycoprotein hormones subunit beta family. As to quaternary structure, heterodimer. The active follitropin is a heterodimer composed of an alpha chain/CGA shared with other hormones and a unique beta chain/FSHB shown here.

Its subcellular location is the secreted. In terms of biological role, together with the alpha chain CGA constitutes follitropin, the follicle-stimulating hormone, and provides its biological specificity to the hormone heterodimer. Binds FSHR, a G protein-coupled receptor, on target cells to activate downstream signaling pathways. Follitropin is involved in follicle development and spermatogenesis in reproductive organs. The polypeptide is Follitropin subunit beta (FSHB) (Cervus nippon (Sika deer)).